Consider the following 426-residue polypeptide: DNA primase DnaG (426 aa).

The Toprim domain occupies Asp-171–Pro-245. 3 residues coordinate Mg(2+): Glu-177, Asp-219, and Asp-221. The segment at Lys-407–Pro-426 is disordered. Residues Gln-413–Pro-426 show a composition bias toward polar residues.

It belongs to the archaeal DnaG primase family. Forms a ternary complex with MCM helicase and DNA. Component of the archaeal exosome complex. The cofactor is Mg(2+).

The catalysed reaction is ssDNA + n NTP = ssDNA/pppN(pN)n-1 hybrid + (n-1) diphosphate.. RNA polymerase that catalyzes the synthesis of short RNA molecules used as primers for DNA polymerase during DNA replication. Also part of the exosome, which is a complex involved in RNA degradation. Acts as a poly(A)-binding protein that enhances the interaction between heteromeric, adenine-rich transcripts and the exosome. In Thermofilum pendens (strain DSM 2475 / Hrk 5), this protein is DNA primase DnaG.